The chain runs to 179 residues: Laminin-binding fimbrial subunit ElfA (179 aa).

Residues 1 to 21 form the signal peptide; it reads MKKSVLTAFITVVCATSSVMA.

This sequence belongs to the fimbrial protein family.

It is found in the fimbrium. Functionally, part of the elfADCG fimbrial operon, which could be required for adherence to host epithelial cells. ElfA is an accessory colonization factor that contributes to adherence of bacteria to human intestinal epithelial cells and to animal intestinal tissue in vitro. Binds specifically to laminin, but not to fibronectin or collagen type IV. The protein is Laminin-binding fimbrial subunit ElfA (elfA) of Escherichia coli O157:H7.